The sequence spans 283 residues: Peroxisome biogenesis protein 22 (283 aa).

The residue at position 2 (alanine 2) is an N-acetylalanine. Residues 45-62 traverse the membrane as a helical segment; sequence IGAIAGLAIAVIFTWRAI. Residues 66 to 107 are disordered; that stretch reads GEQRQRRQPKRRIHNAETSSAAAAASQSNLASSVAPEVSSPR. A compositionally biased stretch (low complexity) spans 81–100; the sequence is AETSSAAAAASQSNLASSVA.

This sequence belongs to the peroxin-22 family. As to quaternary structure, interacts with PEX4.

The protein resides in the peroxisome membrane. May be tethered PEX4 to the peroxisome membrane and may be involved in a late step of the matrix protein import. Does not play a role in the biogenesis of the peroxisomal membrane. The protein is Peroxisome biogenesis protein 22 (PEX22) of Arabidopsis thaliana (Mouse-ear cress).